We begin with the raw amino-acid sequence, 379 residues long: Glucose-1-phosphate adenylyltransferase (379 aa).

Alpha-D-glucose 1-phosphate contacts are provided by residues glycine 164, 179–180, and serine 190; that span reads EK.

Belongs to the bacterial/plant glucose-1-phosphate adenylyltransferase family. As to quaternary structure, homotetramer.

It carries out the reaction alpha-D-glucose 1-phosphate + ATP + H(+) = ADP-alpha-D-glucose + diphosphate. The protein operates within glycan biosynthesis; glycogen biosynthesis. Involved in the biosynthesis of ADP-glucose, a building block required for the elongation reactions to produce glycogen. Catalyzes the reaction between ATP and alpha-D-glucose 1-phosphate (G1P) to produce pyrophosphate and ADP-Glc. This is Glucose-1-phosphate adenylyltransferase from Streptococcus uberis (strain ATCC BAA-854 / 0140J).